The sequence spans 331 residues: 2-oxoglutarate-dependent dioxygenase (331 aa).

One can recognise a Fe2OG dioxygenase domain in the interval 186 to 292 (PACPLRLLHY…RYSVVFFMDG (107 aa)). His-214, Asp-216, and His-272 together coordinate Fe cation. Arg-283 is a binding site for 2-oxoglutarate.

It belongs to the iron/ascorbate-dependent oxidoreductase family. It depends on Fe(2+) as a cofactor.

It participates in mycotoxin biosynthesis. Functionally, 2-oxoglutarate-dependent dioxygenase; part of the gene cluster that mediates the biosynthesis of the selective antifungal agent ascochitine, an o-quinone methide that plays a possible protective role against other microbial competitors in nature and is considered to be important for pathogenicity of legume-associated Didymella species. The pathway probably begins with the synthesis of a keto-aldehyde intermediate by the ascochitine non-reducing polyketide synthase pksAC from successive condensations of 4 malonyl-CoA units, presumably with a simple acetyl-CoA starter unit. Release of the keto-aldehyde intermediate is consistent with the presence of the C-terminal reductive release domain. The HR-PKS (orf7) probably makes a diketide starter unit which is passed to the non-reducing polyketide synthase pksAC for further extension, producing ascochital and ascochitine. The aldehyde dehydrogenase (orf1), the 2-oxoglutarate-dependent dioxygenase (orf3) and the dehydrogenase (orf9) are probably involved in subsequent oxidations of methyl groups to the carboxylic acid of the heterocyclic ring. The ascochitine gene cluster also includes a gene encoding a short peptide with a cupin domain (orf2) that is often found in secondary metabolite gene clusters and which function has still to be determined. In Didymella fabae (Leaf and pod spot disease fungus), this protein is 2-oxoglutarate-dependent dioxygenase.